The primary structure comprises 160 residues: 3-hydroxyacyl-[acyl-carrier-protein] dehydratase FabZ (160 aa).

H58 is an active-site residue.

Belongs to the thioester dehydratase family. FabZ subfamily.

It localises to the cytoplasm. It catalyses the reaction a (3R)-hydroxyacyl-[ACP] = a (2E)-enoyl-[ACP] + H2O. In terms of biological role, involved in unsaturated fatty acids biosynthesis. Catalyzes the dehydration of short chain beta-hydroxyacyl-ACPs and long chain saturated and unsaturated beta-hydroxyacyl-ACPs. This chain is 3-hydroxyacyl-[acyl-carrier-protein] dehydratase FabZ, found in Ruegeria sp. (strain TM1040) (Silicibacter sp.).